The sequence spans 298 residues: ATP synthase gamma chain (298 aa).

Belongs to the ATPase gamma chain family. In terms of assembly, F-type ATPases have 2 components, CF(1) - the catalytic core - and CF(0) - the membrane proton channel. CF(1) has five subunits: alpha(3), beta(3), gamma(1), delta(1), epsilon(1). CF(0) has three main subunits: a, b and c.

Its subcellular location is the cell inner membrane. Produces ATP from ADP in the presence of a proton gradient across the membrane. The gamma chain is believed to be important in regulating ATPase activity and the flow of protons through the CF(0) complex. In Acidithiobacillus ferridurans, this protein is ATP synthase gamma chain.